We begin with the raw amino-acid sequence, 968 residues long: AP2-associated protein kinase 1 (968 aa).

N-acetylmethionine is present on methionine 1. A compositionally biased stretch (basic and acidic residues) spans 1 to 11 (MKKFFDSRREQ). A disordered region spans residues 1–25 (MKKFFDSRREQGGSGLGSGSSGGGG). A compositionally biased stretch (gly residues) spans 12 to 25 (GGSGLGSGSSGGGG). Phosphoserine is present on serine 14. Residues 46 to 315 (VTVDEVLAEG…QVSFFSFKLL (270 aa)) form the Protein kinase domain. ATP is bound by residues 52–60 (LAEGGFAIV) and lysine 74. The Proton acceptor role is filled by aspartate 176. Tyrosine 234 carries the phosphotyrosine modification. At serine 235 the chain carries Phosphoserine. 2 disordered regions span residues 327 to 485 (SPIP…AQAP) and 578 to 640 (IQPP…AGHR). Residues threonine 354 and threonine 389 each carry the phosphothreonine modification. Arginine 391 carries the post-translational modification Omega-N-methylarginine. A compositionally biased stretch (pro residues) spans 437 to 448 (QAPPAPQQPPSA). Low complexity-rich tracts occupy residues 449–472 (PAQG…LKQQ) and 578–589 (IQPPQAQPATAS). Threonine 613 bears the Phosphothreonine mark. Serine 625 is modified (phosphoserine). At threonine 627 the chain carries Phosphothreonine. A phosphoserine mark is found at serine 630, serine 631, serine 644, and serine 657. Threonine 660 carries the phosphothreonine modification. Positions 671-708 (SLNKSKSATTTPSGSPRASQQNVYNPSEGSTWNPFDDD) are disordered. The segment covering 679–703 (TTTPSGSPRASQQNVYNPSEGSTWN) has biased composition (polar residues). At tyrosine 694 the chain carries Phosphotyrosine. Phosphoserine is present on residues serine 738, serine 853, serine 944, and serine 945. Residues 830 to 967 (EKADVAVESL…SLLLVDQLID (138 aa)) are clathrin-binding domain (CBD). Disordered regions lie at residues 843–862 (LEPP…ASNR) and 929–952 (PVLI…ESSL). Residues 851-862 (LPSQTESVASNR) show a composition bias toward polar residues. Low complexity predominate over residues 938 to 951 (GGHSRNSSGSSESS).

The protein belongs to the protein kinase superfamily. Ser/Thr protein kinase family. Interacts (via CBD domain) with clathrin. Interacts with AP-2 complex. Interacts with NUMB. Interacts with alpha-adaptin. Interacts with EPS15. Interacts with membrane-bound activated NOTCH1 but not with the inactive full-length form of NOTCH1. Preferentially interacts with monoubiquitinated activated NOTCH1 compared to the non-ubiquitinated form. In terms of processing, autophosphorylated.

It is found in the cell membrane. It localises to the membrane. The protein localises to the clathrin-coated pit. The protein resides in the presynapse. It catalyses the reaction L-seryl-[protein] + ATP = O-phospho-L-seryl-[protein] + ADP + H(+). The catalysed reaction is L-threonyl-[protein] + ATP = O-phospho-L-threonyl-[protein] + ADP + H(+). With respect to regulation, stimulated by clathrin. Regulates clathrin-mediated endocytosis by phosphorylating the AP2M1/mu2 subunit of the adaptor protein complex 2 (AP-2) which ensures high affinity binding of AP-2 to cargo membrane proteins during the initial stages of endocytosis. Preferentially, may phosphorylate substrates on threonine residues. Regulates phosphorylation of other AP-2 subunits as well as AP-2 localization and AP-2-mediated internalization of ligand complexes. Phosphorylates NUMB and regulates its cellular localization, promoting NUMB localization to endosomes. Binds to and stabilizes the activated form of NOTCH1, increases its localization in endosomes and regulates its transcriptional activity. This Sus scrofa (Pig) protein is AP2-associated protein kinase 1 (AAK1).